Here is a 423-residue protein sequence, read N- to C-terminus: UDP-N-acetylglucosamine 1-carboxyvinyltransferase 1 (423 aa).

23–24 (KN) contributes to the phosphoenolpyruvate binding site. Arg96 contributes to the UDP-N-acetyl-alpha-D-glucosamine binding site. The Proton donor role is filled by Cys120. A 2-(S-cysteinyl)pyruvic acid O-phosphothioketal modification is found at Cys120. Asp309 and Val331 together coordinate UDP-N-acetyl-alpha-D-glucosamine.

Belongs to the EPSP synthase family. MurA subfamily.

It is found in the cytoplasm. The enzyme catalyses phosphoenolpyruvate + UDP-N-acetyl-alpha-D-glucosamine = UDP-N-acetyl-3-O-(1-carboxyvinyl)-alpha-D-glucosamine + phosphate. The protein operates within cell wall biogenesis; peptidoglycan biosynthesis. Functionally, cell wall formation. Adds enolpyruvyl to UDP-N-acetylglucosamine. The polypeptide is UDP-N-acetylglucosamine 1-carboxyvinyltransferase 1 (Streptococcus pyogenes serotype M1).